The primary structure comprises 86 residues: MRPEYAVLFLALIALTYARSNEDVREEIKNEIEKDILEDLVEDEGELDDKAIDVNDAKPFRIRFRRIRWRKLVPYIPVALKLAGKK.

Positions methionine 1 to alanine 18 are cleaved as a signal peptide. Residues arginine 19–alanine 57 constitute a propeptide that is removed on maturation. Alanine 83 carries the post-translational modification Alanine amide.

This sequence belongs to the arminin family. In terms of tissue distribution, expressed in entodermal epithelium along the body column.

It localises to the secreted. The protein localises to the target cell membrane. Functionally, antimicrobial peptide with a broad-spectrum antimicrobial activity. Keeps its antibacterial activity under a wide range of salt concentrations that mimic physiological conditions of human blood, which is surprising, since Hydra is an obligate freshwater animal with nearly no salt tolerance. Does not affect red blood cells. This chain is Arminin 7246, found in Hydra viridissima (Green hydra).